We begin with the raw amino-acid sequence, 208 residues long: Urease accessory protein UreG 2 (208 aa).

16–23 (GPVGSGKT) serves as a coordination point for GTP.

It belongs to the SIMIBI class G3E GTPase family. UreG subfamily. As to quaternary structure, homodimer. UreD, UreF and UreG form a complex that acts as a GTP-hydrolysis-dependent molecular chaperone, activating the urease apoprotein by helping to assemble the nickel containing metallocenter of UreC. The UreE protein probably delivers the nickel.

The protein resides in the cytoplasm. In terms of biological role, facilitates the functional incorporation of the urease nickel metallocenter. This process requires GTP hydrolysis, probably effectuated by UreG. The polypeptide is Urease accessory protein UreG 2 (Methylobacterium radiotolerans (strain ATCC 27329 / DSM 1819 / JCM 2831 / NBRC 15690 / NCIMB 10815 / 0-1)).